A 265-amino-acid chain; its full sequence is MASSSRSVLLLVAALFAVFLGSAHGIAKVPPGPNITATYGDEWLDAKSTWYGKPTGAGPKDNGGACGYKDVDKPPFSGMTGCGNTPIFKDGRGCGSCFEIKCTKPESCSGEPVTVHITDDNEEPIAPYHFDLSGHAFGSMAKKGEEQKLRSAGELELKFRRVKCKYPDGTKPTFHVEKGSNPNYLALLVKYIDGDGDVVAVDIKEKGKDKWIELKESWGAVWRVDTPDKLTGPFTVRYTTEGGTKGEAEDVIPEGWKADTAYEAK.

The signal sequence occupies residues 1–25 (MASSSRSVLLLVAALFAVFLGSAHG). An N-linked (GlcNAc...) asparagine glycan is attached at Asn-34. An Expansin-like EG45 domain is found at 63–169 (GGACGYKDVD…RRVKCKYPDG (107 aa)). In terms of domain architecture, Expansin-like CBD spans 183–264 (NYLALLVKYI…GWKADTAYEA (82 aa)).

It belongs to the expansin family. Expansin B subfamily.

The protein localises to the secreted. This chain is Major pollen allergen Hol l 1, found in Holcus lanatus (Yorkshire-fog).